Reading from the N-terminus, the 602-residue chain is Aspartate--tRNA(Asp/Asn) ligase (602 aa).

E170 is a binding site for L-aspartate. The segment at 194-197 (QLFK) is aspartate. R216 is a binding site for L-aspartate. ATP contacts are provided by residues 216–218 (RDE) and Q225. H448 lines the L-aspartate pocket. E482 contacts ATP. R489 is a binding site for L-aspartate. Residue 534-537 (GWDR) coordinates ATP. A disordered region spans residues 559–602 (GGVDPLTSAPAPITAQQRKESGVDAKPEPKGDAAAAKPQVSAEK). Over residues 575–589 (QRKESGVDAKPEPKG) the composition is skewed to basic and acidic residues.

Belongs to the class-II aminoacyl-tRNA synthetase family. Type 1 subfamily. Homodimer.

The protein resides in the cytoplasm. The enzyme catalyses tRNA(Asx) + L-aspartate + ATP = L-aspartyl-tRNA(Asx) + AMP + diphosphate. Functionally, aspartyl-tRNA synthetase with relaxed tRNA specificity since it is able to aspartylate not only its cognate tRNA(Asp) but also tRNA(Asn). Reaction proceeds in two steps: L-aspartate is first activated by ATP to form Asp-AMP and then transferred to the acceptor end of tRNA(Asp/Asn). In Rhodococcus opacus (strain B4), this protein is Aspartate--tRNA(Asp/Asn) ligase.